A 558-amino-acid polypeptide reads, in one-letter code: Laccase-10 (558 aa).

The first 22 residues, 1–22, serve as a signal peptide directing secretion; that stretch reads MVFPIRILVLFALLAFPACVHG. Plastocyanin-like domains are found at residues 30 to 146 and 157 to 308; these read NVVT…PKLG and EEVI…YSGT. An N-linked (GlcNAc...) asparagine glycan is attached at Asn-76. Cu cation contacts are provided by His-80 and His-82. The N-linked (GlcNAc...) asparagine glycan is linked to Asn-112. His-125 and His-127 together coordinate Cu cation. N-linked (GlcNAc...) asparagine glycosylation is found at Asn-185, Asn-296, Asn-323, Asn-373, Asn-383, Asn-400, and Asn-441. The Plastocyanin-like 3 domain maps to 408–542; the sequence is DFPAKPRRVF…KMAFLVENGK (135 aa). Cu cation contacts are provided by His-459, His-462, His-464, His-521, Cys-522, His-523, and His-527. N-linked (GlcNAc...) asparagine glycosylation occurs at Asn-545.

It belongs to the multicopper oxidase family. The cofactor is Cu cation. In terms of tissue distribution, ubiquitous, with lower levels in siliques.

It is found in the secreted. Its subcellular location is the extracellular space. The protein resides in the apoplast. The enzyme catalyses 4 hydroquinone + O2 = 4 benzosemiquinone + 2 H2O. Functionally, lignin degradation and detoxification of lignin-derived products. The sequence is that of Laccase-10 (LAC10) from Arabidopsis thaliana (Mouse-ear cress).